Consider the following 106-residue polypeptide: MVNYPKKKKMHCPDERCNAHKSFKVVQYKAGKARLYARGKRRYDRKQSGYGGQTKPIFHKKAKTTKKIVLKLQCSNCKSIIQNVLKRTKHFELNDKKKTGNKDPTW.

It belongs to the eukaryotic ribosomal protein eL42 family.

It is found in the cytoplasm. In Trypanosoma brucei brucei, this protein is Large ribosomal subunit protein eL42 (RPL44).